Consider the following 398-residue polypeptide: Histidinol-phosphate aminotransferase (398 aa).

The span at 1-10 (MTGQRATPQP) shows a compositional bias: polar residues. Residues 1–30 (MTGQRATPQPTLDDLPLRDDLRGKSPYGAP) form a disordered region. Position 234 is an N6-(pyridoxal phosphate)lysine (Lys234).

Belongs to the class-II pyridoxal-phosphate-dependent aminotransferase family. Histidinol-phosphate aminotransferase subfamily. Homodimer. Pyridoxal 5'-phosphate is required as a cofactor.

The catalysed reaction is L-histidinol phosphate + 2-oxoglutarate = 3-(imidazol-4-yl)-2-oxopropyl phosphate + L-glutamate. The protein operates within amino-acid biosynthesis; L-histidine biosynthesis; L-histidine from 5-phospho-alpha-D-ribose 1-diphosphate: step 7/9. This is Histidinol-phosphate aminotransferase from Mycobacterium avium (strain 104).